The following is a 497-amino-acid chain: Mechanosensitive ion channel protein 1, mitochondrial (497 aa).

Residues 1-86 constitute a mitochondrion transit peptide; it reads MAGVRLSLLK…RAFSSKSDDF (86 aa). The next 5 membrane-spanning stretches (helical) occupy residues 152-172, 216-236, 238-258, 280-300, and 305-325; these read DVIV…VVMP, LVTF…TIAA, YFSP…LYRW, VLTL…MASA, and VAVQ…AFAA.

It belongs to the MscS (TC 1.A.23) family.

It localises to the mitochondrion membrane. In terms of biological role, mechanosensitive channel that opens in response to stretch forces in the membrane lipid bilayer. This Arabidopsis thaliana (Mouse-ear cress) protein is Mechanosensitive ion channel protein 1, mitochondrial (MSL1).